The chain runs to 389 residues: Mannuronan synthase (389 aa).

Residues 16-116 form the PilZ domain; the sequence is QRQFARVKLP…EVAALRYLIT (101 aa).

The protein belongs to the Alg44 family.

The protein resides in the periplasm. The enzyme catalyses [(1-&gt;4)-beta-D-mannuronosyl](n) + GDP-alpha-D-mannuronate = [(1-&gt;4)-beta-D-mannuronosyl](n+1) + GDP + H(+). It participates in glycan biosynthesis; alginate biosynthesis. Required for alginate biosynthesis. This chain is Mannuronan synthase (alg44), found in Pseudomonas aeruginosa (strain ATCC 15692 / DSM 22644 / CIP 104116 / JCM 14847 / LMG 12228 / 1C / PRS 101 / PAO1).